The sequence spans 718 residues: Amino-acid acetyltransferase, mitochondrial (718 aa).

The transit peptide at 1–36 (MNPNAVWPRTAQSSLKKHQVSLCTCQRRSHYRLRSF) directs the protein to the mitochondrion. The interval 97 to 116 (QHQPDLPQKPTSAPASTAKI) is disordered. The N-acetyltransferase domain maps to 539 to 708 (RQPRLRLDDP…YEAVCRSIQP (170 aa)).

It belongs to the acetyltransferase family.

The protein localises to the mitochondrion. The enzyme catalyses L-glutamate + acetyl-CoA = N-acetyl-L-glutamate + CoA + H(+). The protein operates within amino-acid biosynthesis; L-arginine biosynthesis; N(2)-acetyl-L-ornithine from L-glutamate: step 1/4. In terms of biological role, N-acetylglutamate synthase involved in arginine biosynthesis. In Aspergillus clavatus (strain ATCC 1007 / CBS 513.65 / DSM 816 / NCTC 3887 / NRRL 1 / QM 1276 / 107), this protein is Amino-acid acetyltransferase, mitochondrial (arg2).